The sequence spans 238 residues: Testis-specific gene A8 protein (238 aa).

The disordered stretch occupies residues 35–238; the sequence is GKGAKTNKRG…GEAVATTTMT (204 aa). Residues 39-48 show a composition bias toward basic residues; the sequence is KTNKRGKRGG. 8 consecutive repeat copies span residues 79 to 93, 94 to 108, 109 to 123, 124 to 138, 153 to 158, 171 to 176, 180 to 185, and 189 to 194. The tract at residues 79 to 148 is 4 X 15 AA tandem repeats of A-A-A-A-A-P-E-A-A-A-S-[PL]-E-S-S; the sequence is AAAAAPEAAA…AAAAAPEAAA (70 aa). Low complexity-rich tracts occupy residues 79 to 200 and 208 to 220; these read AAAA…AAPA and WEAAAVVGEAAVK. The tract at residues 153–194 is 4 X 6 AA repeats of P-A-A-P-E-A; it reads PAAPEAAAAPEVAAAPATPAAPEATAAPAAPEAATTPAAPEA.

As to expression, specifically expressed in testis (at protein level).

The protein localises to the cytoplasm. Its subcellular location is the nucleus. It is found in the nucleoplasm. The sequence is that of Testis-specific gene A8 protein from Mus musculus (Mouse).